The sequence spans 756 residues: NADP-dependent malic enzyme (756 aa).

The segment at 1–428 (MTEQLRQAAL…KLTQFVYKTS (428 aa)) is malic enzyme. Tyr39 serves as the catalytic Proton donor. The Proton acceptor role is filled by Lys94. The a divalent metal cation site is built by Glu136, Asp137, and Asp162. Residues 195-198 (AGAA), Asn288, and Asn320 each bind NADP(+). The phosphate acetyltransferase stretch occupies residues 429 to 756 (LFMRPIFSQA…AYAAVKAQQE (328 aa)).

In the N-terminal section; belongs to the malic enzymes family. The protein in the C-terminal section; belongs to the phosphate acetyltransferase and butyryltransferase family. The cofactor is Mg(2+). Mn(2+) is required as a cofactor.

It carries out the reaction (S)-malate + NADP(+) = pyruvate + CO2 + NADPH. It catalyses the reaction oxaloacetate + H(+) = pyruvate + CO2. The sequence is that of NADP-dependent malic enzyme (maeB) from Haemophilus influenzae (strain ATCC 51907 / DSM 11121 / KW20 / Rd).